A 129-amino-acid polypeptide reads, in one-letter code: Glycine cleavage system H protein (129 aa).

The Lipoyl-binding domain occupies 24–106; it reads IAVIGITAYA…YGDGWLIKVR (83 aa). Residue K65 is modified to N6-lipoyllysine.

Belongs to the GcvH family. As to quaternary structure, the glycine cleavage system is composed of four proteins: P, T, L and H. It depends on (R)-lipoate as a cofactor.

Its function is as follows. The glycine cleavage system catalyzes the degradation of glycine. The H protein shuttles the methylamine group of glycine from the P protein to the T protein. The sequence is that of Glycine cleavage system H protein from Synechococcus sp. (strain JA-3-3Ab) (Cyanobacteria bacterium Yellowstone A-Prime).